The sequence spans 376 residues: Heptahelical transmembrane protein ADIPOR1 (376 aa).

Residues M1–T90 are Cytoplasmic-facing. The tract at residues P20 to K46 is disordered. Residues I91–L111 form a helical membrane-spanning segment. The Extracellular portion of the chain corresponds to G112–P179. The helical transmembrane segment at F180–L200 threads the bilayer. The Cytoplasmic portion of the chain corresponds to S201 to Y216. The helical transmembrane segment at T217 to C237 threads the bilayer. The Extracellular segment spans residues E238–R240. A helical membrane pass occupies residues W241–M261. The Cytoplasmic portion of the chain corresponds to S262–R274. A helical membrane pass occupies residues A275–V295. Residues N296–N303 lie on the Extracellular side of the membrane. Residues V304–L324 form a helical membrane-spanning segment. At T325–Q344 the chain is on the cytoplasmic side. The helical transmembrane segment at I345–I365 threads the bilayer. The Extracellular portion of the chain corresponds to Q366 to P376.

Belongs to the ADIPOR family.

It is found in the membrane. Its function is as follows. May play a role in abiotic stress response. The protein is Heptahelical transmembrane protein ADIPOR1 (ADIPOR1) of Oryza sativa subsp. japonica (Rice).